We begin with the raw amino-acid sequence, 98 residues long: NADH-ubiquinone oxidoreductase chain 4L (98 aa).

3 helical membrane passes run 1–21 (MTPT…GMLI), 29–49 (SLLC…LIAL), and 61–81 (IILL…LVSI).

The protein belongs to the complex I subunit 4L family. In terms of assembly, core subunit of respiratory chain NADH dehydrogenase (Complex I) which is composed of 45 different subunits.

It is found in the mitochondrion inner membrane. It catalyses the reaction a ubiquinone + NADH + 5 H(+)(in) = a ubiquinol + NAD(+) + 4 H(+)(out). Functionally, core subunit of the mitochondrial membrane respiratory chain NADH dehydrogenase (Complex I) which catalyzes electron transfer from NADH through the respiratory chain, using ubiquinone as an electron acceptor. Part of the enzyme membrane arm which is embedded in the lipid bilayer and involved in proton translocation. In Macaca maura (Moor macaque), this protein is NADH-ubiquinone oxidoreductase chain 4L (MT-ND4L).